We begin with the raw amino-acid sequence, 374 residues long: MPEVSNGRRPSVATFLRQFASTIIPLVNVKQSMPTTQINIVLAEPRCMAGEFFNAKVLLDSSDPDTVVHSFCAEIKGIGRTGWVNIHTDKIFETEKTYIDTQVQLCDSGTCLPVGKHQFPVQIRIPLNCPSSYESQFGSIRYQMKVELRASTDQASCSEVFPLVILTRSFFDDVPLNAMSPIDFKDEVDFTCCTLPFGCVSLNMSLTRTAFRIGESIEAVVTINNRTRKGLKEVALQLIMKTQFEARSRYEHVNEKKLAEQLIEMVPLGAVKSRCRMEFEKCLLRIPDAAPPTQNYNRGAGESSIIAIHYVLKLTALPGIECEIPLIVTSCGYMDPHKQAAFQHHLNRSKAKVSKTEQQQRKTRNIVEENPYFR.

Residues histidine 344 to arginine 374 form a disordered region.

Belongs to the arrestin family.

The polypeptide is Arrestin domain-containing protein 15 (arrd-15) (Caenorhabditis elegans).